The primary structure comprises 168 residues: Nicotinamide-nucleotide adenylyltransferase (168 aa).

The protein belongs to the archaeal NMN adenylyltransferase family.

The protein resides in the cytoplasm. The catalysed reaction is beta-nicotinamide D-ribonucleotide + ATP + H(+) = diphosphate + NAD(+). It functions in the pathway cofactor biosynthesis; NAD(+) biosynthesis; NAD(+) from nicotinamide D-ribonucleotide: step 1/1. The polypeptide is Nicotinamide-nucleotide adenylyltransferase (Methanoculleus marisnigri (strain ATCC 35101 / DSM 1498 / JR1)).